Here is a 175-residue protein sequence, read N- to C-terminus: Sec-independent protein translocase protein TatB (175 aa).

The chain crosses the membrane as a helical span at residues 1 to 21 (MLDLGLTKMALIGVVALVVLG). Disordered regions lie at residues 104–132 (GGALEDVGNAGNTSWPGSTPAAGAKRKNW) and 155–175 (SGAARVARHTPATMRRPTRFF).

It belongs to the TatB family. In terms of assembly, the Tat system comprises two distinct complexes: a TatABC complex, containing multiple copies of TatA, TatB and TatC subunits, and a separate TatA complex, containing only TatA subunits. Substrates initially bind to the TatABC complex, which probably triggers association of the separate TatA complex to form the active translocon.

Its subcellular location is the cell inner membrane. In terms of biological role, part of the twin-arginine translocation (Tat) system that transports large folded proteins containing a characteristic twin-arginine motif in their signal peptide across membranes. Together with TatC, TatB is part of a receptor directly interacting with Tat signal peptides. TatB may form an oligomeric binding site that transiently accommodates folded Tat precursor proteins before their translocation. This is Sec-independent protein translocase protein TatB from Paraburkholderia xenovorans (strain LB400).